The sequence spans 341 residues: Adenine deaminase (341 aa).

Residues His17, His19, and His197 each coordinate Zn(2+). Glu200 functions as the Proton donor in the catalytic mechanism. Asp278 serves as a coordination point for Zn(2+). Substrate is bound at residue Asp279.

Belongs to the metallo-dependent hydrolases superfamily. Adenosine and AMP deaminases family. Adenine deaminase type 2 subfamily. Zn(2+) is required as a cofactor.

It carries out the reaction adenine + H2O + H(+) = hypoxanthine + NH4(+). Functionally, catalyzes the hydrolytic deamination of adenine to hypoxanthine. Plays an important role in the purine salvage pathway and in nitrogen catabolism. In Chlorobium luteolum (strain DSM 273 / BCRC 81028 / 2530) (Pelodictyon luteolum), this protein is Adenine deaminase.